The primary structure comprises 89 residues: HssA/B-like protein 14 (89 aa).

This sequence belongs to the hssA/B family.

This is HssA/B-like protein 14 (hssl14) from Dictyostelium discoideum (Social amoeba).